The primary structure comprises 189 residues: MKKYSKKDRQMKLQVAIEENPFITDEQLAEKFGVSVQTIRLDRVALSIPELRERIKHVASVTYADAVKSLPIDEVIGEIIDIQLSKSAISIFDVRSEHVFKRNKIARGHHLFAQANSLATAVIPNEIALTTQATVRFVRSVNEGERIIAKAKVRPATDNRAITIVDVKSYVGDEIVLKGKFEMYHATQK.

It belongs to the FapR family.

Its function is as follows. Transcriptional factor involved in regulation of membrane lipid biosynthesis by repressing genes involved in fatty acid and phospholipid metabolism. The sequence is that of Transcription factor FapR from Listeria monocytogenes serotype 4a (strain HCC23).